A 269-amino-acid polypeptide reads, in one-letter code: 5'-nucleotidase SurE (269 aa).

Residues aspartate 11, aspartate 12, serine 43, and asparagine 101 each coordinate a divalent metal cation.

The protein belongs to the SurE nucleotidase family. Requires a divalent metal cation as cofactor.

The protein localises to the cytoplasm. It catalyses the reaction a ribonucleoside 5'-phosphate + H2O = a ribonucleoside + phosphate. Nucleotidase that shows phosphatase activity on nucleoside 5'-monophosphates. The sequence is that of 5'-nucleotidase SurE from Prochlorococcus marinus (strain MIT 9515).